We begin with the raw amino-acid sequence, 347 residues long: Uroporphyrinogen decarboxylase (347 aa).

Residues 24–28 (RQAGR), aspartate 74, tyrosine 145, serine 200, and histidine 315 contribute to the substrate site.

It belongs to the uroporphyrinogen decarboxylase family. Homodimer.

It localises to the cytoplasm. It carries out the reaction uroporphyrinogen III + 4 H(+) = coproporphyrinogen III + 4 CO2. It participates in porphyrin-containing compound metabolism; protoporphyrin-IX biosynthesis; coproporphyrinogen-III from 5-aminolevulinate: step 4/4. Catalyzes the decarboxylation of four acetate groups of uroporphyrinogen-III to yield coproporphyrinogen-III. The polypeptide is Uroporphyrinogen decarboxylase (Hydrogenobaculum sp. (strain Y04AAS1)).